The following is a 439-amino-acid chain: 3beta-hydroxysteroid-dehydrogenase/decarboxylase isoform 1 (439 aa).

16–21 (GGRGFA) contributes to the NAD(+) binding site. N-linked (GlcNAc...) asparagine glycans are attached at residues Asn-75 and Asn-158. 2 residues coordinate NAD(+): Tyr-161 and Lys-165. Lys-165 serves as the catalytic Proton donor. The N-linked (GlcNAc...) asparagine glycan is linked to Asn-327. The Reticulon; atypical domain maps to 371 to 439 (VTETIQWKKQ…MKVFGSKKID (69 aa)). The next 2 membrane-spanning stretches (helical) occupy residues 381-401 (TLIA…TTGS) and 405-425 (IITA…INGI).

This sequence belongs to the 3-beta-HSD family.

It is found in the endoplasmic reticulum membrane. The enzyme catalyses a 3beta-hydroxysteroid-4alpha-carboxylate + NAD(+) = a 3-oxosteroid + CO2 + NADH. It catalyses the reaction 4alpha-carboxy-4beta,14alpha-dimethyl-9beta,19-cyclo-5alpha-ergost-24(24(1))-en-3beta-ol + NAD(+) = cycloeucalenone + CO2 + NADH. It participates in steroid biosynthesis; zymosterol biosynthesis; zymosterol from lanosterol: step 4/6. In terms of biological role, 3beta-hydroxysteroid-dehydrogenase/decarboxylase involved in sterol synthesis. Catalyzes the formation of 3-oxosteroids from 3beta-hydroxysteroids-4alpha-carboxylate. Involved in the regulation of inflorescence internodes and leaves growth, probably by affecting auxin transporter activity possibly by altering sterol composition in the membranes. In Arabidopsis thaliana (Mouse-ear cress), this protein is 3beta-hydroxysteroid-dehydrogenase/decarboxylase isoform 1.